A 168-amino-acid chain; its full sequence is S-ribosylhomocysteine lyase (168 aa).

Residues His54, His58, and Cys128 each contribute to the Fe cation site.

Belongs to the LuxS family. Homodimer. Fe cation serves as cofactor.

It carries out the reaction S-(5-deoxy-D-ribos-5-yl)-L-homocysteine = (S)-4,5-dihydroxypentane-2,3-dione + L-homocysteine. Functionally, involved in the synthesis of autoinducer 2 (AI-2) which is secreted by bacteria and is used to communicate both the cell density and the metabolic potential of the environment. The regulation of gene expression in response to changes in cell density is called quorum sensing. Catalyzes the transformation of S-ribosylhomocysteine (RHC) to homocysteine (HC) and 4,5-dihydroxy-2,3-pentadione (DPD). This is S-ribosylhomocysteine lyase from Neisseria gonorrhoeae (strain ATCC 700825 / FA 1090).